The chain runs to 314 residues: Testis-specific Y-encoded protein 9 (314 aa).

The protein belongs to the nucleosome assembly protein (NAP) family.

The protein localises to the cytoplasm. Its subcellular location is the nucleus. Functionally, may be involved in sperm differentiation and proliferation. The chain is Testis-specific Y-encoded protein 9 from Homo sapiens (Human).